The chain runs to 277 residues: F420-dependent methylenetetrahydromethanopterin dehydrogenase (277 aa).

The protein belongs to the MTD family.

It catalyses the reaction 5,10-methylenetetrahydromethanopterin + oxidized coenzyme F420-(gamma-L-Glu)(n) + 2 H(+) = 5,10-methenyl-5,6,7,8-tetrahydromethanopterin + reduced coenzyme F420-(gamma-L-Glu)(n). It participates in one-carbon metabolism; methanogenesis from CO(2); 5,10-methylene-5,6,7,8-tetrahydromethanopterin from 5,10-methenyl-5,6,7,8-tetrahydromethanopterin (coenzyme F420 route): step 1/1. Functionally, catalyzes the reversible reduction of methenyl-H(4)MPT(+) to methylene-H(4)MPT. The protein is F420-dependent methylenetetrahydromethanopterin dehydrogenase of Methanococcus maripaludis (strain DSM 14266 / JCM 13030 / NBRC 101832 / S2 / LL).